The sequence spans 125 residues: MADSPRVCVQVQSVYIEAQSSPEDERFVFAYTVTVRNLGRTPVQLLGRYWLITNGNGKETEVQGEGVVGVQPHIQPGGEYQYTSGAVIETPFGTMQGHYEMVDDQGNGFHLDIPVFRLAVPTLIH.

One can recognise an ApaG domain in the interval Met1–His125.

The chain is Protein ApaG from Cronobacter sakazakii (strain ATCC BAA-894) (Enterobacter sakazakii).